Reading from the N-terminus, the 209-residue chain is UPF0502 protein mll4256 (209 aa).

Belongs to the UPF0502 family.

The polypeptide is UPF0502 protein mll4256 (Mesorhizobium japonicum (strain LMG 29417 / CECT 9101 / MAFF 303099) (Mesorhizobium loti (strain MAFF 303099))).